Here is a 154-residue protein sequence, read N- to C-terminus: Transcriptional repressor NrdR (154 aa).

A zinc finger spans residues 3 to 34 (CPFCSHNDSKVIDSRPTDEGQAIRRRRECISC). The ATP-cone domain occupies 49–139 (LIVVKKNGNR…VYREFKDINT (91 aa)).

This sequence belongs to the NrdR family. Zn(2+) is required as a cofactor.

In terms of biological role, negatively regulates transcription of bacterial ribonucleotide reductase nrd genes and operons by binding to NrdR-boxes. This chain is Transcriptional repressor NrdR, found in Alkaliphilus oremlandii (strain OhILAs) (Clostridium oremlandii (strain OhILAs)).